Here is a 278-residue protein sequence, read N- to C-terminus: MTVLHSVDFFPSGKAPVAIEPRLPQAAFPEHHHDFHEIVIVEHGTGIHVFNGQPYTISGGTVCFVRDHDRHLYEHTDNLCLTNVLWRSPDAFQFLAGLDQLLPQEQDGYYPSHWRVNQSVLQQVRQLVGLMERAGDGVDAPAVANREILFMQLLVLLRRSSLMEGATNNDAKLNQLMAWLEDHFAEEVCWEAVAEQFSLSLRTLHRQLKQHTGLTPQRYLNRLRLIKARHLLRHSDHSVTEIAYRCGFGDSNHFSTLFRREFNWSPRDIRQGRDAIIQ.

The region spanning 174–272 is the HTH araC/xylS-type domain; the sequence is NQLMAWLEDH…NWSPRDIRQG (99 aa). 2 consecutive DNA-binding regions (H-T-H motif) follow at residues 191-212 and 239-262; these read EAVA…KQHT and VTEI…RREF.

In terms of assembly, binds DNA as a dimer.

Its subcellular location is the cytoplasm. Its function is as follows. Activates expression of the rhaBAD and rhaT operons. This chain is HTH-type transcriptional activator RhaS, found in Salmonella agona (strain SL483).